A 405-amino-acid polypeptide reads, in one-letter code: MENIMTLPKIKQVRAWFTGGATAEKGAGGGDYHDQGANHWIDDHIATPMSKYRDYEQSRQSFGINVLGTLIVEVEAENGQTGFAVSTAGEMGCFIVEKHLNRFIEGKCVSDIKLIHDQMLNATLYYSGSGGLVMNTISCVDLALWDLFGKVVGLPVYKLLGGAVRDEIQFYATGARPDLAKEMGFIGGKMPTHWGPHDGDAGIRKDAAMVADMREKCGEDFWLMLDCWMSQDVNYAIKLAHACAPYNLKWIEECLPPQQYEGYRELKHNAPAGMMVTSGEHHGTLQSFRTLSENGIDIMQPDVGWCGGLTTLVEIAAIAKSRGQLVVPHGSSVYSHHAVITFTNTPFSEFLMTSPDCSTMRPQFDPILLNEPVPVNGRIHKSVLDKPGFGVELNRDCNLKRPYSH.

2 residues coordinate substrate: H33 and R59. Mg(2+) contacts are provided by D226, E252, and E280. Residue H329 is the Proton acceptor of the active site. E349 provides a ligand contact to substrate.

Belongs to the mandelate racemase/muconate lactonizing enzyme family. RhamD subfamily. In terms of assembly, homooctamer; tetramer of dimers. It depends on Mg(2+) as a cofactor.

The enzyme catalyses L-rhamnonate = 2-dehydro-3-deoxy-L-rhamnonate + H2O. Catalyzes the dehydration of L-rhamnonate to 2-keto-3-deoxy-L-rhamnonate (KDR). The sequence is that of L-rhamnonate dehydratase from Escherichia coli O6:K15:H31 (strain 536 / UPEC).